The sequence spans 331 residues: 2-isopropylmalate synthase (331 aa).

In terms of domain architecture, Pyruvate carboxyltransferase spans 1-80; that stretch reads RDEVVRGRDV…YTRINTREIY (80 aa). Residues histidine 15, histidine 17, and asparagine 51 each contribute to the Mn(2+) site. The regulatory domain stretch occupies residues 205–331; it reads QLEHVQFFSG…PSIEEVHRGV (127 aa).

This sequence belongs to the alpha-IPM synthase/homocitrate synthase family. LeuA type 1 subfamily. Homotetramer. It depends on Mn(2+) as a cofactor.

It is found in the cytoplasm. The catalysed reaction is 3-methyl-2-oxobutanoate + acetyl-CoA + H2O = (2S)-2-isopropylmalate + CoA + H(+). It participates in amino-acid biosynthesis; L-leucine biosynthesis; L-leucine from 3-methyl-2-oxobutanoate: step 1/4. Catalyzes the condensation of the acetyl group of acetyl-CoA with 3-methyl-2-oxobutanoate (2-oxoisovalerate) to form 3-carboxy-3-hydroxy-4-methylpentanoate (2-isopropylmalate). The polypeptide is 2-isopropylmalate synthase (Thermus thermophilus).